The primary structure comprises 413 residues: Imidazolonepropionase (413 aa).

Residues His-70 and His-72 each contribute to the Fe(3+) site. Positions 70 and 72 each coordinate Zn(2+). 4-imidazolone-5-propanoate is bound by residues Arg-79, Tyr-142, and His-175. Tyr-142 is an N-formimidoyl-L-glutamate binding site. His-240 is a binding site for Fe(3+). His-240 is a Zn(2+) binding site. Glu-243 lines the 4-imidazolone-5-propanoate pocket. Asp-315 lines the Fe(3+) pocket. Position 315 (Asp-315) interacts with Zn(2+). N-formimidoyl-L-glutamate-binding residues include Asn-317 and Gly-319. Ser-320 serves as a coordination point for 4-imidazolone-5-propanoate.

Belongs to the metallo-dependent hydrolases superfamily. HutI family. It depends on Zn(2+) as a cofactor. Requires Fe(3+) as cofactor.

It localises to the cytoplasm. The enzyme catalyses 4-imidazolone-5-propanoate + H2O = N-formimidoyl-L-glutamate. It functions in the pathway amino-acid degradation; L-histidine degradation into L-glutamate; N-formimidoyl-L-glutamate from L-histidine: step 3/3. Catalyzes the hydrolytic cleavage of the carbon-nitrogen bond in imidazolone-5-propanoate to yield N-formimidoyl-L-glutamate. It is the third step in the universal histidine degradation pathway. The chain is Imidazolonepropionase from Treponema denticola (strain ATCC 35405 / DSM 14222 / CIP 103919 / JCM 8153 / KCTC 15104).